Reading from the N-terminus, the 507-residue chain is Probable Xaa-Pro aminopeptidase HCAG_02413 (507 aa).

Positions 283, 294, 431, and 469 each coordinate Mn(2+).

This sequence belongs to the peptidase M24B family. Requires Mn(2+) as cofactor.

The enzyme catalyses Release of any N-terminal amino acid, including proline, that is linked to proline, even from a dipeptide or tripeptide.. In terms of biological role, catalyzes the removal of a penultimate prolyl residue from the N-termini of peptides. The sequence is that of Probable Xaa-Pro aminopeptidase HCAG_02413 from Ajellomyces capsulatus (strain NAm1 / WU24) (Darling's disease fungus).